A 672-amino-acid polypeptide reads, in one-letter code: Peptidoglycan D,D-transpeptidase MrdA (672 aa).

A helical transmembrane segment spans residues 21–41 (IFFAVGLVIICLLVLASRYAY). Ser326 functions as the Acyl-ester intermediate in the catalytic mechanism. 4 residues coordinate Zn(2+): Asp350, Asp365, His371, and Cys384. The tract at residues 616–672 (ANHQVNGGLMTAGIKPGELPSGNESASSTPATSAPTSAAASTPQATPTRPATNEVDE) is disordered. Residues 640-672 (SASSTPATSAPTSAAASTPQATPTRPATNEVDE) are compositionally biased toward low complexity.

The protein belongs to the transpeptidase family. MrdA subfamily. In terms of assembly, monomer. It depends on Zn(2+) as a cofactor.

The protein resides in the cell inner membrane. The catalysed reaction is Preferential cleavage: (Ac)2-L-Lys-D-Ala-|-D-Ala. Also transpeptidation of peptidyl-alanyl moieties that are N-acyl substituents of D-alanine.. It participates in cell wall biogenesis; peptidoglycan biosynthesis. With respect to regulation, inhibited by the beta-lactams sulbactam and piperacillin-tazobactam. Its function is as follows. Catalyzes cross-linking of the peptidoglycan cell wall. Involved in the determination of the rod shape of the cell. In Acinetobacter baumannii (strain ATCC 19606 / DSM 30007 / JCM 6841 / CCUG 19606 / CIP 70.34 / NBRC 109757 / NCIMB 12457 / NCTC 12156 / 81), this protein is Peptidoglycan D,D-transpeptidase MrdA.